Consider the following 730-residue polypeptide: MAAGVEAAAEVAATEIKMEEESGAPGVPSGNGAPGPKGEGERPAQNEKRKEKNIKRGGNRFEPYANPTKRYRAFITNIPFDVKWQSLKDLVKEKVGEVTYVELLMDAEGKSRGCAVVEFKMEESMKKAAEVLNKHSLSGRPLKVKEDPDGEHARRAMQKVMATTGGMGMGPGGPGMITIPPSILNNPNIPNEIIHALQAGRLGSTVFVANLDYKVGWKKLKEVFSMAGVVVRADILEDKDGKSRGIGTVTFEQSIEAVQAISMFNGQLLFDRPMHVKMDERALPKGDFFPPERPQQLPHGLGGIGMGLGPGGQPIDANHLNKGIGMGNIGPAGMGMEGIGFGINKMGGMEGPFGGGMENMGRFGSGMNMGRINEILSNALKRGEIIAKQGGGGGGGSVPGIERMGPGIDRLGGAGMERMGAGLGHGMDRVGSEIERMGLVMDRMGSVERMGSGIERMGPLGLDHMASSIERMGQTMERIGSGVERMGAGMGFGLERMAAPIDRVGQTIERMGSGVERMGPAIERMGLSMERMVPAGMGAGLERMGPVMDRMATGLERMGANNLERMGLERMGANSLERMGLERMGANSLERMGPAMGPALGAGIERMGLAMGGGGGASFDRAIEMERGNFGGSFAGSFGGAGGHAPGVARKACQIFVRNLPFDFTWKMLKDKFNECGHVLYADIKMENGKSKGCGVVKFESPEVAERACRMMNGMKLSGREIDVRIDRNA.

The segment covering M1–A13 has biased composition (low complexity). Positions M1 to E62 are disordered. A2 carries the post-translational modification N-acetylalanine. A Glycyl lysine isopeptide (Lys-Gly) (interchain with G-Cter in SUMO2) cross-link involves residue K17. Position 29 is a phosphoserine (S29). A Glycyl lysine isopeptide (Lys-Gly) (interchain with G-Cter in SUMO2) cross-link involves residue K37. Residues G38–K50 show a composition bias toward basic and acidic residues. Residues K69 and K83 each participate in a glycyl lysine isopeptide (Lys-Gly) (interchain with G-Cter in SUMO2) cross-link. 2 consecutive RRM domains span residues Y71 to D149 and S204 to R281. Phosphoserine is present on S86. Residues K88 and K127 each participate in a glycyl lysine isopeptide (Lys-Gly) (interchain with G-Cter in SUMO2) cross-link. Position 134 is an N6-acetyllysine; alternate (K134). Residue K134 forms a Glycyl lysine isopeptide (Lys-Gly) (interchain with G-Cter in SUMO2); alternate linkage. Glycyl lysine isopeptide (Lys-Gly) (interchain with G-Cter in SUMO2) cross-links involve residues K143 and K145. Phosphoserine is present on S204. Residue K221 forms a Glycyl lysine isopeptide (Lys-Gly) (interchain with G-Cter in SUMO2) linkage. K277 is modified (N6-acetyllysine; alternate). Residue K277 forms a Glycyl lysine isopeptide (Lys-Gly) (interchain with G-Cter in SUMO2); alternate linkage. Glycyl lysine isopeptide (Lys-Gly) (interchain with G-Cter in SUMO2) cross-links involve residues K285 and K345. S365 and S377 each carry phosphoserine. Residues K381 and K388 each participate in a glycyl lysine isopeptide (Lys-Gly) (interchain with G-Cter in SUMO2) cross-link. Position 397 is a phosphoserine (S397). 4 tandem repeats follow at residues G400 to G405, G407 to G412, G415 to G420, and G426 to G431. Residues G400–G608 are 27 X 6 AA repeats of [GEVSTPAN]-[ILMV]-[DE]-[RH]-[MLVI]-[GAV]. Residue S432 is modified to Phosphoserine. 3 repeat units span residues E433–G438, V440–G445, and S446–G451. Residue S452 is modified to Phosphoserine. Repeat copies occupy residues G453 to G458, G461 to A466, S468 to G473, and T475 to G480. Residue S468 is modified to Phosphoserine. S481 bears the Phosphoserine mark. Tandem repeats lie at residues G482–G487, G493–A498, P500–G505, T507–G512, G514–G519, A521–G526, S528–V533, G540–G545, V547–A552, G554–G559, N562–M566, G567–G572, S575–M579, G580–G585, S588–G593, and G603–G608. R496 carries the post-translational modification Omega-N-methylarginine. Phosphoserine is present on S528. S575 bears the Phosphoserine mark. Residue S588 is modified to Phosphoserine. A phosphoserine mark is found at S618, S633, and S637. K651 participates in a covalent cross-link: Glycyl lysine isopeptide (Lys-Gly) (interchain with G-Cter in SUMO2). Residues C653–N729 enclose the RRM 3 domain. A Phosphothreonine modification is found at T665. Residue K667 forms a Glycyl lysine isopeptide (Lys-Gly) (interchain with G-Cter in SUMO2) linkage. K672 carries the post-translational modification N6-acetyllysine. Residues K685 and K692 each participate in a glycyl lysine isopeptide (Lys-Gly) (interchain with G-Cter in SUMO2) cross-link. At K698 the chain carries N6-acetyllysine; alternate. Residue K698 forms a Glycyl lysine isopeptide (Lys-Gly) (interchain with G-Cter in SUMO2); alternate linkage. K698 is covalently cross-linked (Glycyl lysine isopeptide (Lys-Gly) (interchain with G-Cter in SUMO1); alternate). Position 701 is a phosphoserine (S701). K716 participates in a covalent cross-link: Glycyl lysine isopeptide (Lys-Gly) (interchain with G-Cter in SUMO2).

Identified in the spliceosome C complex. Interacts with PPIA/CYPA. In terms of processing, sumoylated.

It is found in the nucleus. The protein resides in the nucleolus. Functionally, pre-mRNA binding protein in vivo, binds avidly to poly(G) and poly(U) RNA homopolymers in vitro. Involved in splicing. Acts as a receptor for carcinoembryonic antigen in Kupffer cells, may initiate a series of signaling events leading to tyrosine phosphorylation of proteins and induction of IL-1 alpha, IL-6, IL-10 and tumor necrosis factor alpha cytokines. This is Heterogeneous nuclear ribonucleoprotein M (HNRNPM) from Homo sapiens (Human).